The chain runs to 764 residues: G-type lectin S-receptor-like serine/threonine-protein kinase SD3-1 (764 aa).

The N-terminal stretch at methionine 1 to serine 24 is a signal peptide. 2 consecutive Bulb-type lectin domains span residues glutamate 25 to glycine 151 and threonine 154 to valine 279. Over glutamate 25 to cysteine 442 the chain is Extracellular. Residues asparagine 92, asparagine 198, and asparagine 248 are each glycosylated (N-linked (GlcNAc...) asparagine). The EGF-like; atypical domain occupies valine 283–aspartate 320. Cystine bridges form between cysteine 287-cysteine 298, cysteine 293-cysteine 308, cysteine 332-cysteine 413, cysteine 365-cysteine 388, and cysteine 369-cysteine 375. 2 N-linked (GlcNAc...) asparagine glycosylation sites follow: asparagine 301 and asparagine 353. Residues cysteine 332–cysteine 413 form the Apple domain. N-linked (GlcNAc...) asparagine glycosylation occurs at asparagine 423. The helical transmembrane segment at leucine 443–valine 463 threads the bilayer. At tyrosine 464–proline 764 the chain is on the cytoplasmic side. One can recognise a Protein kinase domain in the interval tyrosine 466 to proline 764. ATP-binding positions include isoleucine 508 to valine 516 and lysine 526. The caM-binding stretch occupies residues leucine 586 to valine 603. The disordered stretch occupies residues aspartate 738 to proline 764. Residues serine 749 to proline 764 show a composition bias toward low complexity.

The protein localises to the cell membrane. The enzyme catalyses L-seryl-[protein] + ATP = O-phospho-L-seryl-[protein] + ADP + H(+). The catalysed reaction is L-threonyl-[protein] + ATP = O-phospho-L-threonyl-[protein] + ADP + H(+). The sequence is that of G-type lectin S-receptor-like serine/threonine-protein kinase SD3-1 (SD31) from Arabidopsis thaliana (Mouse-ear cress).